Reading from the N-terminus, the 357-residue chain is Retinoic acid-induced protein 3 (357 aa).

Residues 1-33 are Extracellular-facing; sequence MATTVPDGCRNGLKSKYYRLCDKAEAWGIVLET. A helical membrane pass occupies residues 34–54; it reads VATAGVVTSVAFMLTLPILVC. Residues 55–68 lie on the Cytoplasmic side of the membrane; sequence KVQDSNRRKMLPTQ. Residues 69 to 89 traverse the membrane as a helical segment; that stretch reads FLFLLGVLGIFGLTFAFIIGL. At 90 to 97 the chain is on the extracellular side; sequence DGSTGPTR. A helical transmembrane segment spans residues 98-118; sequence FFLFGILFSICFSCLLAHAVS. At 119–129 the chain is on the cytoplasmic side; it reads LTKLVRGRKPL. A helical membrane pass occupies residues 130–150; the sequence is SLLVILGLAVGFSLVQDVIAI. The Extracellular segment spans residues 151 to 176; it reads EYIVLTMNRTNVNVFSELSAPRRNED. N158 is a glycosylation site (N-linked (GlcNAc...) asparagine). A helical membrane pass occupies residues 177–197; that stretch reads FVLLLTYVLFLMALTFLMSSF. At 198–212 the chain is on the cytoplasmic side; it reads TFCGSFTGWKRHGAH. Residues 213–233 traverse the membrane as a helical segment; the sequence is IYLTMLLSIAIWVAWITLLML. At 234–247 the chain is on the extracellular side; the sequence is PDFDRRWDDTILSS. A helical transmembrane segment spans residues 248–268; that stretch reads ALAANGWVFLLAYVSPEFWLL. Residues 269–357 are Cytoplasmic-facing; it reads TKQRNPMDYP…KDYEVKKEGS (89 aa). Position 301 is a phosphoserine (S301). Phosphotyrosine occurs at positions 317 and 320. S345 carries the post-translational modification Phosphoserine. 2 positions are modified to phosphotyrosine: Y347 and Y350.

Belongs to the G-protein coupled receptor 3 family. As to quaternary structure, interacts (via its transmembrane domain) with EGFR. In terms of processing, phosphorylated in two conserved double-tyrosine motifs, Tyr-317/Tyr-320 and Tyr-347/Tyr-350, by EGFR; leading to inactivation of the tumor suppressive function of GPRC5A in lung cancer cells. Tyr-317 and Tyr-320 are the preferred residues responsible for EGFR-mediated GPRC5A phosphorylation. As to expression, expressed at high level in fetal and adult lung tissues but repressed in most human lung cancers. Constitutively expressed in fetal kidney and adult placenta, kidney, prostate, testis, ovary, small intestine, colon, stomach, and spinal cord at low to moderate levels. Not detectable in fetal heart, brain, and liver and adult heart, brain, liver, skeletal muscle, pancreas, spleen, thymus, and peripheral leukocytes. According to PubMed:10783259, expressed at low but detectable level in pancreas and heart.

The protein localises to the cell membrane. The protein resides in the cytoplasmic vesicle membrane. Orphan receptor. Could be involved in modulating differentiation and maintaining homeostasis of epithelial cells. This retinoic acid-inducible GPCR provide evidence for a possible interaction between retinoid and G-protein signaling pathways. Functions as a negative modulator of EGFR signaling. May act as a lung tumor suppressor. In Homo sapiens (Human), this protein is Retinoic acid-induced protein 3 (GPRC5A).